Here is an 801-residue protein sequence, read N- to C-terminus: Phosphatidylinositol 4-kinase beta (801 aa).

Disordered regions lie at residues 1–29 (MGDT…GGSL), 101–121 (EDEM…RRRQ), and 250–304 (RKRE…EDEP). Glycine 2 carries the N-acetylglycine modification. The segment at 2 to 68 (GDTAVEPAPL…VRLLHGAVAV (67 aa)) is interaction with ACBD3. The PIK helical domain occupies 29–242 (LLSVITEGVG…GTKLRKLILS (214 aa)). Serine 258 is modified (phosphoserine). Polar residues predominate over residues 259–268 (PALNTGLSPS). Threonine 263 carries the post-translational modification Phosphothreonine. Phosphoserine occurs at positions 266, 275, 277, 284, 294, and 413. Positions 278–294 (DATASISLSSSLKRTAS) are enriched in low complexity. Threonine 423 is subject to Phosphothreonine. A Phosphoserine modification is found at serine 496. 2 positions are modified to phosphothreonine: threonine 502 and threonine 504. The 267-residue stretch at 520 to 786 (EPWQEKVRRI…MVDGSMRSIT (267 aa)) folds into the PI3K/PI4K catalytic domain. The interval 526–532 (VRRIREG) is G-loop. The catalytic loop stretch occupies residues 653–661 (QVKDRHNGN). The segment at 672–696 (HIDFGFILSSSPRNLGFETSAFKLT) is activation loop.

Belongs to the PI3/PI4-kinase family. Type III PI4K subfamily. Interacts with ARF1 and ARF3 in the Golgi complex, but not with ARF4, ARF5 or ARF6. Interacts with NCS1/FREQ in a calcium-independent manner. Interacts with CALN1/CABP8 and CALN2/CABP7; in a calcium-dependent manner; this interaction competes with NCS1/FREQ binding. Interacts with ACBD3. Interacts with ARMH3, YWHAB, YWHAE, YWHAG, YWHAH, YWHAQ, YWHAZ and SFN. Interacts with GGA2 (via VHS domain); the interaction is important for PI4KB location at the Golgi apparatus membrane. Interacts with ATG9A. Mg(2+) is required as a cofactor. The cofactor is Mn(2+).

Its subcellular location is the endomembrane system. It is found in the mitochondrion outer membrane. It localises to the rough endoplasmic reticulum membrane. The protein localises to the golgi apparatus. The protein resides in the golgi apparatus membrane. It catalyses the reaction a 1,2-diacyl-sn-glycero-3-phospho-(1D-myo-inositol) + ATP = a 1,2-diacyl-sn-glycero-3-phospho-(1D-myo-inositol 4-phosphate) + ADP + H(+). Its activity is regulated as follows. Inhibited by wortmannin. Increased kinase activity upon interaction with NCS1/FREQ. Phosphorylates phosphatidylinositol (PI) in the first committed step in the production of the second messenger inositol-1,4,5,-trisphosphate (PIP). May regulate Golgi disintegration/reorganization during mitosis, possibly via its phosphorylation. Involved in Golgi-to-plasma membrane trafficking. May play an important role in the inner ear development. The sequence is that of Phosphatidylinositol 4-kinase beta (PI4KB) from Sorex araneus (Eurasian common shrew).